We begin with the raw amino-acid sequence, 777 residues long: MNNSLENTISFEEYIRVKARSVPQHRMKEFLDSLASKGPEALQEFQQTATTTMVYQQGGNCIYTDSTEVAGSLLELACPVTTSVQPQTQQEQQIQVQQPQQVQVQVQVQQSPQQVSAQQLSPQFTVHQPAEQPIQVQVQIQGQAPQSAAPSIQTPSLQSPSPSQLQAAQIQVQHVQAAQQIQAAEIPEEHIPHQQIQAQLVAGQSLAGGQQIQIQTVGALSPPPSQQGSPREGERRVGTASVLQPVKKRKVDMPITVSYAISGQPVATVLAIPQGQQQSYVSLRPDLLTVDSAHLYSATGTITSPTGETWTIPVYSAQPRGDPQQQSITHIAIPQEAYNAVHVSGSPKALAAVKLEDDKEKMVGTTSVVKNSHEEVVQTLANSLFPAQFMNGNIHIPVAVQAVAGTYQNTAQTVHIWDPQQQPQQQTAQEQTPPPQQQQQQLQVTCSAQTVQVAEVEPQSQPQPSPELLLPNSLKPEEGLEVWKNWAQTKNAELEKDAQNRLAPIGRRQLLRFQEDLISSAVAELNYGLCLMTREARNGEGEPYDPDVLYYIFLCIQKYLFENGRVDDIFSDLYYVRFTEWLHEVLKDVQPRVTPLGYVLPSHVTEEMLWECKQLGAHSPSTLLTTLMFFNTKYFLLKTVDQHMKLAFSKVLRQTKKSPSNPKDKSTSIRYLKALGIHQTGQKVTDDMYAEQTENPENPLRCPIKLYDFYLFKCPQSVKGRNDTFYLTPEPVVAPNSPIWYSVQPISREQMGQMLTRILVIREIQEAIAVANATTMH.

N-acetylmethionine is present on M1. Positions 6-48 (ENTISFEEYIRVKARSVPQHRMKEFLDSLASKGPEALQEFQQT) constitute a CARD domain. Disordered regions lie at residues 140–164 (IQGQ…SPSQ) and 219–240 (ALSP…VGTA). S346 is modified (phosphoserine). Residues K354 and K359 each participate in a glycyl lysine isopeptide (Lys-Gly) (interchain with G-Cter in SUMO2) cross-link. The disordered stretch occupies residues 420–440 (QQQPQQQTAQEQTPPPQQQQQ). S465 carries the phosphoserine modification.

Expressed highly in prefrontal cortex, craniofacial area and near the limbs of mouse embryos. Expressed in heart, skeletal muscle, liver, kidney, lung, brain, spleen, intestine and growth plate in mice.

It localises to the nucleus. The protein localises to the cytoplasm. The protein resides in the cell membrane. In terms of biological role, transcriptional regulator that acts as a mediator of the integrated stress response (ISR) through transcriptional control of protein homeostasis under conditions of ER stress. Controls the outcome of the unfolded protein response (UPR), an ER-stress response pathway that either promotes recovery of ER homeostasis and cell survival, or triggers the terminal UPR which elicits programmed cell death when ER stress is prolonged and unresolved. ER stress induces QRICH1 translation by a ribosome translation re-initiation mechanism in response to EIF2S1/eIF-2-alpha phosphorylation, and stress-induced QRICH1 regulates a transcriptional program associated with protein translation, protein secretion-mediated proteotoxicity and cell death during the terminal UPR. May cooperate with ATF4 transcription factor signaling to regulate ER homeostasis which is critical for cell viability. Up-regulates CASP3/caspase-3 activity in epithelial cells under ER stress. Central regulator of proteotoxicity associated with ER stress-mediated inflammatory diseases in the intestines and liver. Involved in chondrocyte hypertrophy, a process required for normal longitudinal bone growth. This is Transcriptional regulator QRICH1 from Mus musculus (Mouse).